Reading from the N-terminus, the 460-residue chain is Decaprenylphosphoryl-beta-D-ribose oxidase (460 aa).

In terms of domain architecture, FAD-binding PCMH-type spans 19-193; that stretch reads TAPTVASVLS…LRATIEMTPT (175 aa). FAD is bound by residues 52 to 62, Gly-116, 121 to 124, 128 to 131, Ile-183, and Tyr-414; these read ARGLGRSYGDN, TVGG, and CDIH.

This sequence belongs to the DprE1 family. As to quaternary structure, monomer. Interacts with DprE2 to form an epimerase complex.

The protein localises to the periplasm. The catalysed reaction is trans,octa-cis-decaprenylphospho-beta-D-ribofuranose + FAD + H(+) = trans,octa-cis-decaprenylphospho-beta-D-erythro-pentofuranosid-2-ulose + FADH2. It functions in the pathway cell wall biogenesis; cell wall polysaccharide biosynthesis. With respect to regulation, is inhibited by 8-nitro-benzothiazinones (BTZs) such as BTZ043; BTZs are a new class of antimycobacterial agents that block formation of both cell-wall lipoarabinomannan and arabinogalactan via inhibition of decaprenyl-phospho-arabinose (DPA) synthesis. BTZs are suicide inhibitors that act via covalent modification of DprE1; the essential nitro group of these compounds is reduced by DprE1 to a nitroso group, which then specifically reacts with Cys-386 of DprE1 to form an irreversible semimercaptal adduct. Other compounds with diverse scaffolds (dinitrobenzamides and nitrobenzoquinoxalines) also act as covalent DprE1 inhibitors. Functionally, component of the DprE1-DprE2 complex that catalyzes the 2-step epimerization of decaprenyl-phospho-ribose (DPR) to decaprenyl-phospho-arabinose (DPA), a key precursor that serves as the arabinose donor required for the synthesis of cell-wall arabinans. DprE1 catalyzes the first step of epimerization, namely FAD-dependent oxidation of the C2' hydroxyl of DPR to yield the keto intermediate decaprenyl-phospho-2'-keto-D-arabinose (DPX). The intermediate DPX is then transferred to DprE2 subunit of the epimerase complex, most probably through a 'substrate channel' at the interface of DprE1-DprE2 complex. Can also use farnesyl-phosphoryl-beta-D-ribofuranose (FPR) as substrate in vitro. Appears to be essential for the growth of M.smegmatis. The sequence is that of Decaprenylphosphoryl-beta-D-ribose oxidase from Mycolicibacterium smegmatis (strain ATCC 700084 / mc(2)155) (Mycobacterium smegmatis).